A 92-amino-acid chain; its full sequence is Antifungal protein B (92 aa).

The N-terminal stretch at 1–18 (MQITSIAIVFFAAMGAVA) is a signal peptide. Positions 19–34 (NPIARESDDLDARDVQ) are excised as a propeptide. Intrachain disulfides connect C42/C70, C49/C77, and C62/C88.

The protein resides in the secreted. It is found in the host cytoplasm. In terms of biological role, antifungal protein that acts as an inhibitor of growth of human pathogenic molds and yeasts. Is active against the model organism Neurospora crassa, the opportunistic human pathogens Aspergillus fumigatus, Trichophyton rubrum, and Aspergillus terreus. Provokes a reduction of the incidence of infections caused by Penicillium digitatum and Penicillium italicum in oranges and by Penicillium expansum in apples. Low doses of pafB have self-inhibition activity. Also shows activity against the model yeast Saccaromyces cerevisiae and the opportunistic human pathogen Candida albicans. No antibacterial activity is observed on the Gram-negative Escherichia coli and the Gram-positive Bacillus subtilis. Finally, also shows anti-viral activity in a model of HCoV 229E infected L132 cells. This is Antifungal protein B from Penicillium chrysogenum (Penicillium notatum).